We begin with the raw amino-acid sequence, 314 residues long: Tyrosine recombinase XerC (314 aa).

The region spanning 1–85 (MNEQVEAFLR…AVKSFFTFLT (85 aa)) is the Core-binding (CB) domain. Residues 106–291 (DLPRALTPRQ…NHESSHTPHA (186 aa)) enclose the Tyr recombinase domain. Residues Arg147, Lys171, His243, Arg246, and His269 contribute to the active site. The O-(3'-phospho-DNA)-tyrosine intermediate role is filled by Tyr278. The tract at residues 284–314 (ESSHTPHAHPAPRASEVNGVRDEQALVPEEK) is disordered. Residues 302-314 (GVRDEQALVPEEK) show a composition bias toward basic and acidic residues.

It belongs to the 'phage' integrase family. XerC subfamily. As to quaternary structure, forms a cyclic heterotetrameric complex composed of two molecules of XerC and two molecules of XerD.

Its subcellular location is the cytoplasm. In terms of biological role, site-specific tyrosine recombinase, which acts by catalyzing the cutting and rejoining of the recombining DNA molecules. The XerC-XerD complex is essential to convert dimers of the bacterial chromosome into monomers to permit their segregation at cell division. It also contributes to the segregational stability of plasmids. The protein is Tyrosine recombinase XerC of Roseiflexus castenholzii (strain DSM 13941 / HLO8).